A 123-amino-acid chain; its full sequence is Crossover junction endodeoxyribonuclease Hjc (123 aa).

Glu9 serves as a coordination point for Mg(2+). The active site involves Ser29. Mg(2+) is bound by residues Asp33 and Glu46.

This sequence belongs to the Holliday junction resolvase Hjc family. As to quaternary structure, homodimer. Probably interacts with PCNA and RadB. Requires Mg(2+) as cofactor. The cofactor is Mn(2+).

The catalysed reaction is Endonucleolytic cleavage at a junction such as a reciprocal single-stranded crossover between two homologous DNA duplexes (Holliday junction).. Cleavage inhibited by RadB in the absence (but not presence) of ATP. In terms of biological role, a structure-specific endonuclease that resolves Holliday junction (HJ) intermediates during genetic recombination. Cleaves 4-way DNA junctions introducing paired nicks in opposing strands, leaving a 5'-terminal phosphate and a 3'-terminal hydroxyl group that are subsequently ligated to produce recombinant products. Cleaves both mobile and immobile junctions. Binds 4-way junction DNA, a synthetic Hj, binding is not competed by dsDNA. The protein is Crossover junction endodeoxyribonuclease Hjc of Pyrococcus furiosus (strain ATCC 43587 / DSM 3638 / JCM 8422 / Vc1).